Here is a 262-residue protein sequence, read N- to C-terminus: Acyl-[acyl-carrier-protein]--UDP-N-acetylglucosamine O-acyltransferase (262 aa).

It belongs to the transferase hexapeptide repeat family. LpxA subfamily. As to quaternary structure, homotrimer.

The protein localises to the cytoplasm. It catalyses the reaction a (3R)-hydroxyacyl-[ACP] + UDP-N-acetyl-alpha-D-glucosamine = a UDP-3-O-[(3R)-3-hydroxyacyl]-N-acetyl-alpha-D-glucosamine + holo-[ACP]. Its pathway is glycolipid biosynthesis; lipid IV(A) biosynthesis; lipid IV(A) from (3R)-3-hydroxytetradecanoyl-[acyl-carrier-protein] and UDP-N-acetyl-alpha-D-glucosamine: step 1/6. In terms of biological role, involved in the biosynthesis of lipid A, a phosphorylated glycolipid that anchors the lipopolysaccharide to the outer membrane of the cell. The sequence is that of Acyl-[acyl-carrier-protein]--UDP-N-acetylglucosamine O-acyltransferase from Pectobacterium carotovorum subsp. carotovorum (strain PC1).